Here is a 433-residue protein sequence, read N- to C-terminus: D-amino acid dehydrogenase (433 aa).

3-17 contributes to the FAD binding site; that stretch reads VVILGSGVVGVASAW.

This sequence belongs to the DadA oxidoreductase family. FAD is required as a cofactor.

It carries out the reaction a D-alpha-amino acid + A + H2O = a 2-oxocarboxylate + AH2 + NH4(+). Its pathway is amino-acid degradation; D-alanine degradation; NH(3) and pyruvate from D-alanine: step 1/1. In terms of biological role, oxidative deamination of D-amino acids. The protein is D-amino acid dehydrogenase of Erwinia tasmaniensis (strain DSM 17950 / CFBP 7177 / CIP 109463 / NCPPB 4357 / Et1/99).